The following is a 397-amino-acid chain: Cathepsin E-A (397 aa).

Residues 1-16 form the signal peptide; the sequence is MRQILVLLLFATLVYG. Residues 17–52 constitute a propeptide, activation peptide; that stretch reads LIRVPLKRQKSIRKTLKEKGKLSHIWTQQGIDMVQY. Residues 74–385 form the Peptidase A1 domain; sequence YFGEISVGTP…DRGNNRVGLA (312 aa). An N-linked (GlcNAc...) asparagine glycan is attached at Asn86. The active site involves Asp92. Residues Cys105 and Cys110 are joined by a disulfide bond. Asn130 carries an N-linked (GlcNAc...) asparagine glycan. Cys268 and Cys272 are joined by a disulfide. Asp277 is a catalytic residue. The cysteines at positions 310 and 344 are disulfide-linked.

This sequence belongs to the peptidase A1 family. As to quaternary structure, homodimer; disulfide-linked. Post-translationally, glycosylated. Contains high mannose-type oligosaccharide. In terms of tissue distribution, expressed predominantly in the larval foregut and the anterior and posterior adult stomach.

It localises to the endosome. It carries out the reaction Similar to cathepsin D, but slightly broader specificity.. May have a role in immune function. Probably involved in the processing of antigenic peptides during MHC class II-mediated antigen presentation. This Xenopus laevis (African clawed frog) protein is Cathepsin E-A (ctse-a).